The following is a 350-amino-acid chain: Mannonate dehydratase (350 aa).

Belongs to the mannonate dehydratase family. Fe(2+) is required as a cofactor. Requires Mn(2+) as cofactor.

It carries out the reaction D-mannonate = 2-dehydro-3-deoxy-D-gluconate + H2O. Its pathway is carbohydrate metabolism; pentose and glucuronate interconversion. Its function is as follows. Catalyzes the dehydration of D-mannonate. This is Mannonate dehydratase from Clostridium perfringens (strain 13 / Type A).